Here is a 695-residue protein sequence, read N- to C-terminus: MFLPSRKALAFLACLASHSVALLTTSENSTHFNLANDRFSIALAKSNGHIVDVQLDGQDLLGPVDGNAGKGPYLDCSCIPSGFWTPGSGAHLELINGTDSTGTAYGGLYMSATYAGTNQTLSQWFFLRGEETGLHAFSRVTYFNETTPSLRSLGELRTLFRPSTDLWTHFSTSDGNYGPKPLGSNSGLVVQDATTYIGNVTDDPYVSQYSDYFTKYTLAESWRNHDVHGLFSDGSSSSDGSTFGAWLVHNTVETYYGGPLHSDLVVDGIVYNYLVSGHHGAPTPNLTHGFDRTWGPQFYYFNRGDSETTLADLRADAAKYADPEWNAEFYDSIADHIPNFTPSTGRTTFKGKVSLPKGAKRPIIVLSEDGQDFQLNVFNTESLQYWAEIDKSGSFSIPRVVEGTYRITIYADEIFGWFIQDHVKVLKSQSKDYSFTWKEESAGKEIWRIGIPDKSSGEYLHGYAPDTSKPLQPEQHRIYWGKYDYPADFPEGINFHVGKSDPSQDLNYIHWAFFPSQGNHLRTEPYYDNVNNWTVTFDLTADQLHNTNTATFTVQIAGAKTANGNAKWTPVEGKYSNLPWTVNVNGRYESTWVIPYWRSGSCGVRSAVSCQNIEQKFAFPSKNLQEGKNEFVLSLPFNASSTETALLPDALYVQARVMGSRLDPARPAPNPLVNSNLGFGRDNPIMEFSNNRIIT.

The first 21 residues, 1 to 21, serve as a signal peptide directing secretion; it reads MFLPSRKALAFLACLASHSVA. N-linked (GlcNAc...) asparagine glycans are attached at residues N28, N96, N118, N144, N199, N285, N532, and N638.

Belongs to the polysaccharide lyase 4 family.

Its subcellular location is the secreted. The enzyme catalyses Endotype eliminative cleavage of L-alpha-rhamnopyranosyl-(1-&gt;4)-alpha-D-galactopyranosyluronic acid bonds of rhamnogalacturonan I domains in ramified hairy regions of pectin leaving L-rhamnopyranose at the reducing end and 4-deoxy-4,5-unsaturated D-galactopyranosyluronic acid at the non-reducing end.. Pectinolytic enzymes consist of four classes of enzymes: pectin lyase, polygalacturonase, pectin methylesterase and rhamnogalacturonase. Degrades the rhamnogalacturonan I (RG-I) backbone of pectin. The sequence is that of Probable rhamnogalacturonate lyase C (rglC) from Aspergillus oryzae (strain ATCC 42149 / RIB 40) (Yellow koji mold).